The sequence spans 562 residues: Glutamine--tRNA ligase (562 aa).

Positions 35 to 45 (PEPNGYLHIGH) match the 'HIGH' region motif. ATP-binding positions include 36-38 (EPN) and 42-48 (HIGHAKS). The L-glutamine site is built by Asp68 and Tyr213. ATP contacts are provided by residues Thr232, 262-263 (RL), and 270-272 (LSK). The 'KMSKS' region signature appears at 269 to 273 (ILSKR).

The protein belongs to the class-I aminoacyl-tRNA synthetase family. As to quaternary structure, monomer.

It is found in the cytoplasm. It catalyses the reaction tRNA(Gln) + L-glutamine + ATP = L-glutaminyl-tRNA(Gln) + AMP + diphosphate. The sequence is that of Glutamine--tRNA ligase from Buchnera aphidicola subsp. Schizaphis graminum (strain Sg).